We begin with the raw amino-acid sequence, 212 residues long: MQLFPLCLIISCSCPTVQASKLCLGWLWGMDIDPYKEFGASVELLSFLPSDFFPSIRDLLDTASALYREALESPEHCSPHHTALRQAILCWGELMNLATWVGSNLEDPASRELVVSYVNVNMGLKIRQLLWFHISCLTFGRETVLEYLVSFGVWIRTPPAYRPPNAPILSTLPETTVVRRRGRSPRRRTPSPRRRRSQSPRRRRSQSRESQC.

The first 19 residues, 1–19, serve as a signal peptide directing secretion; it reads MQLFPLCLIISCSCPTVQA. The segment at 25-27 is HBEAG; the sequence is GWL. Residues 165–212 are disordered; it reads NAPILSTLPETTVVRRRGRSPRRRTPSPRRRRSQSPRRRRSQSRESQC. Residues 178 to 205 are compositionally biased toward basic residues; that stretch reads VRRRGRSPRRRTPSPRRRRSQSPRRRRS. A 1; half-length repeat occupies 184 to 190; the sequence is SPRRRTP. Residues 184–206 are 3 X 8 AA repeats of S-P-R-R-R-R-S-Q; sequence SPRRRTPSPRRRRSQSPRRRRSQ. 2 tandem repeats follow at residues 191 to 198 and 199 to 206.

This sequence belongs to the orthohepadnavirus precore antigen family. Homodimerizes. Phosphorylated. In terms of processing, cleaved by host furin.

It localises to the secreted. It is found in the host nucleus. May regulate immune response to the intracellular capsid in acting as a T-cell tolerogen, by having an immunoregulatory effect which prevents destruction of infected cells by cytotoxic T-cells. This immune regulation may predispose to chronicity during perinatal infections and prevent severe liver injury during adult infections. This chain is External core antigen, found in Hepatitis B virus genotype C subtype ayr (isolate Human/Japan/Okamoto/-) (HBV-C).